Reading from the N-terminus, the 904-residue chain is Nitrate reductase [NADH] 2 (904 aa).

Composition is skewed to polar residues over residues 1–10 (MAASVENRQF) and 35–50 (PSPNSTNFQKKPNSTI). The segment at 1–65 (MAASVENRQF…SSEDDDDDDE (65 aa)) is disordered. Acidic residues predominate over residues 56-65 (SSEDDDDDDE). C183 lines the Mo-molybdopterin pocket. Positions 531–606 (SKMYSMSEVR…LEDFRIGELI (76 aa)) constitute a Cytochrome b5 heme-binding domain. Residues H566 and H589 each contribute to the heme site. An FAD-binding FR-type domain is found at 647–759 (REKIPCKLID…KGPLGHIEYQ (113 aa)). Residues 699 to 702 (RAYT), 716 to 720 (VVKIY), F721, F728, 733 to 735 (QMS), and T786 contribute to the FAD site.

This sequence belongs to the nitrate reductase family. As to quaternary structure, homodimer. It depends on FAD as a cofactor. Heme is required as a cofactor. Mo-molybdopterin serves as cofactor.

The catalysed reaction is nitrite + NAD(+) + H2O = nitrate + NADH + H(+). With respect to regulation, regulated by the nitrogen source and controlled by the circadian rhythm. Its function is as follows. Nitrate reductase is a key enzyme involved in the first step of nitrate assimilation in plants, fungi and bacteria. This Nicotiana tabacum (Common tobacco) protein is Nitrate reductase [NADH] 2 (NIA2).